A 102-amino-acid polypeptide reads, in one-letter code: RNA-binding protein Hfq (102 aa).

The Sm domain maps to 9 to 68 (DPFLNALRRERVPVSIYLVNGIKLQGQIESFDQFVILLKNTVSQMVYKHAISTVVPSRPV). The segment at 63–102 (VPSRPVSHHSNNAGGGTSSNYHHGSSAQNTSAQQDSEETE) is disordered. Residues 70-96 (HHSNNAGGGTSSNYHHGSSAQNTSAQQ) show a composition bias toward polar residues.

Belongs to the Hfq family. As to quaternary structure, homohexamer.

Its function is as follows. RNA chaperone that binds small regulatory RNA (sRNAs) and mRNAs to facilitate mRNA translational regulation in response to envelope stress, environmental stress and changes in metabolite concentrations. Also binds with high specificity to tRNAs. This chain is RNA-binding protein Hfq, found in Escherichia fergusonii (strain ATCC 35469 / DSM 13698 / CCUG 18766 / IAM 14443 / JCM 21226 / LMG 7866 / NBRC 102419 / NCTC 12128 / CDC 0568-73).